Consider the following 158-residue polypeptide: Sec-independent protein translocase protein TatB (158 aa).

The helical transmembrane segment at Met1–Gly21 threads the bilayer. A disordered region spans residues Asp73–Pro158. Residues Ala80–Glu90 are compositionally biased toward low complexity.

It belongs to the TatB family. In terms of assembly, the Tat system comprises two distinct complexes: a TatABC complex, containing multiple copies of TatA, TatB and TatC subunits, and a separate TatA complex, containing only TatA subunits. Substrates initially bind to the TatABC complex, which probably triggers association of the separate TatA complex to form the active translocon.

The protein resides in the cell inner membrane. Its function is as follows. Part of the twin-arginine translocation (Tat) system that transports large folded proteins containing a characteristic twin-arginine motif in their signal peptide across membranes. Together with TatC, TatB is part of a receptor directly interacting with Tat signal peptides. TatB may form an oligomeric binding site that transiently accommodates folded Tat precursor proteins before their translocation. This chain is Sec-independent protein translocase protein TatB, found in Pseudomonas syringae pv. syringae (strain B728a).